Consider the following 270-residue polypeptide: Peflin (270 aa).

A disordered region spans residues 1-97 (MSYQYGQGYS…YRQQGSAGNV (97 aa)). 5 tandem repeats follow at residues 22-30 (PPRAPYAGG), 44-54 (PPGQQYGGGSP), 62-70 (GPRAPYGGG), 72-81 (APGGPYGGYG), and 83-91 (PQGGPYRQQ). Residues 22 to 91 (PPRAPYAGGP…QPQGGPYRQQ (70 aa)) form a 5 X 9 AA approximate tandem repeat of [AP]-P-G-G-P-Y-G-G-P-P region. Low complexity-rich tracts occupy residues 26–47 (PYAG…PPGQ) and 55–66 (YGSYGQPGPRAP). A compositionally biased stretch (gly residues) spans 67–84 (YGGGQAPGGPYGGYGQPQ). EF-hand domains are found at residues 100-135 (GVNP…FNNS), 141-169 (TCIM…WTFL), 170-202 (QQWR…MGYN), 203-239 (LSPQ…LQSM), and 240-269 (TQAF…ITRL). Residues Asp-113, Asp-115, Ser-117, Tyr-119, and Glu-124 each coordinate Ca(2+). Ca(2+)-binding residues include Asp-180, Asp-182, Ser-184, Ser-186, and Glu-191.

In terms of assembly, heterodimer; heterodimerizes (via the EF-hand 5) with pdcd6.

Its subcellular location is the cytoplasm. It is found in the endoplasmic reticulum. The protein resides in the membrane. It localises to the cytoplasmic vesicle. The protein localises to the COPII-coated vesicle membrane. Functionally, calcium-binding protein that acts as an adapter that bridges unrelated proteins or stabilizes weak protein-protein complexes in response to calcium. Acts as a negative regulator of ER-Golgi transport. The protein is Peflin of Danio rerio (Zebrafish).